The following is a 248-amino-acid chain: ATP synthase subunit a (248 aa).

The next 6 helical transmembrane spans lie at 34–54 (TNAT…LVFG), 91–111 (YFPY…LGLL), 121–141 (IAVT…LGFV), 147–167 (FLGL…LAVI), 196–216 (VFAA…AITA), and 220–240 (LEVL…CVYL).

It belongs to the ATPase A chain family. As to quaternary structure, F-type ATPases have 2 components, CF(1) - the catalytic core - and CF(0) - the membrane proton channel. CF(1) has five subunits: alpha(3), beta(3), gamma(1), delta(1), epsilon(1). CF(0) has three main subunits: a(1), b(2) and c(9-12). The alpha and beta chains form an alternating ring which encloses part of the gamma chain. CF(1) is attached to CF(0) by a central stalk formed by the gamma and epsilon chains, while a peripheral stalk is formed by the delta and b chains.

The protein localises to the cell inner membrane. Key component of the proton channel; it plays a direct role in the translocation of protons across the membrane. This is ATP synthase subunit a from Paracoccus denitrificans (strain Pd 1222).